A 134-amino-acid polypeptide reads, in one-letter code: Lymphocyte antigen 6A-2/6E-1 (134 aa).

Positions 1–26 are cleaved as a signal peptide; it reads MDTSHTTKSCLLILLVALLCAERAQG. Residues 27-119 enclose the UPAR/Ly6 domain; sequence LECYQCYGVP…NGGSTWTMAG (93 aa). Intrachain disulfides connect Cys29–Cys53, Cys32–Cys41, Cys46–Cys74, Cys78–Cys98, and Cys99–Cys104. Gly112 carries GPI-anchor amidated glycine lipidation. Residues 113 to 134 constitute a propeptide, removed in mature form; the sequence is STWTMAGVLLFSLSSVLLQTLL.

O-glycosylated. Not N-glycosylated. Post-translationally, not phosphorylated. As to expression, widely expressed.

The protein resides in the cell membrane. In terms of biological role, T-cell activation. The protein is Lymphocyte antigen 6A-2/6E-1 (Ly6a) of Mus musculus (Mouse).